The primary structure comprises 337 residues: Cytoskeleton protein RodZ (337 aa).

The Cytoplasmic segment spans residues 1–111; the sequence is MNTEATHDQN…LGKRRKKRDG (111 aa). The HTH cro/C1-type domain maps to 19–71; it reads LRNAREQLGLSQQAVAERLCLKVSTVRDIEEDKAPADLASTFLRGYIRSYARL. Positions 30–49 form a DNA-binding region, H-T-H motif; that stretch reads QQAVAERLCLKVSTVRDIEE. The helical; Signal-anchor for type II membrane protein transmembrane segment at 112-132 threads the bilayer; sequence WLMTFTWLVLFVVIGLSGAWW. The Periplasmic portion of the chain corresponds to 133–337; that stretch reads WQDHKAQQEE…TLNAEQSPAQ (205 aa). A compositionally biased stretch (polar residues) spans 145–167; it reads TMADQSSAELSSNSEQGQSVPLN. Positions 145-218 are disordered; sequence TMADQSSAEL…AVVSPSQANV (74 aa). Positions 168 to 207 are enriched in low complexity; it reads TSTTTDPATTSTPPASVDTTATNTQTPAVTAPAPAVDPQQ. A compositionally biased stretch (polar residues) spans 208–218; it reads NAVVSPSQANV.

It belongs to the RodZ family.

It is found in the cell inner membrane. Cytoskeletal protein that is involved in cell-shape control through regulation of the length of the long axis. The chain is Cytoskeleton protein RodZ from Shigella flexneri serotype 5b (strain 8401).